A 138-amino-acid chain; its full sequence is Nucleoside diphosphate kinase (138 aa).

Residues lysine 9, phenylalanine 57, arginine 85, threonine 91, arginine 102, and asparagine 112 each coordinate ATP. Histidine 115 serves as the catalytic Pros-phosphohistidine intermediate.

Belongs to the NDK family. Homotetramer. Requires Mg(2+) as cofactor.

It localises to the cytoplasm. It carries out the reaction a 2'-deoxyribonucleoside 5'-diphosphate + ATP = a 2'-deoxyribonucleoside 5'-triphosphate + ADP. The enzyme catalyses a ribonucleoside 5'-diphosphate + ATP = a ribonucleoside 5'-triphosphate + ADP. Its function is as follows. Major role in the synthesis of nucleoside triphosphates other than ATP. The ATP gamma phosphate is transferred to the NDP beta phosphate via a ping-pong mechanism, using a phosphorylated active-site intermediate. The sequence is that of Nucleoside diphosphate kinase from Lawsonia intracellularis (strain PHE/MN1-00).